The primary structure comprises 642 residues: Envelope glycoprotein (642 aa).

The signal sequence occupies residues 1–34 (MESPTHPKPSKDKTLSWNLAFLVGILFTIDIGMA). Topologically, residues 35–586 (NPSPHQIYNV…FNKSPWFTTL (552 aa)) are extracellular. Residues Asn-43 and Asn-58 are each glycosylated (N-linked (GlcNAc...) asparagine; by host). Disulfide bonds link Cys-125-Cys-147 and Cys-139-Cys-152. Residues 233–283 (PPQAMGPNLVLPDQKPPSRQSQTGSKVATQRPQTNESAPRSVAPTTMGPKR) form a disordered region. Residues 249–270 (PSRQSQTGSKVATQRPQTNESA) are compositionally biased toward polar residues. Asn-267, Asn-302, and Asn-307 each carry an N-linked (GlcNAc...) asparagine; by host glycan. Cystine bridges form between Cys-312/Cys-315, Cys-312/Cys-539, and Cys-531/Cys-538. The CXXC motif lies at 312–315 (CWLC). N-linked (GlcNAc...) asparagine; by host glycans are attached at residues Asn-334, Asn-374, Asn-390, and Asn-410. Positions 448–468 (ISLTVALMLGGLTVGGIAAGV) are fusion peptide. Coiled-coil stretches lie at residues 476 to 525 (LETA…ILFL) and 535 to 571 (KEEC…SQQG). Residues 514-530 (LQNRRGLDILFLQEGGL) form an immunosuppression region. Residues 531–539 (CAALKEECC) carry the CX6CC motif. A helical transmembrane segment spans residues 587-607 (ISSIMGPLLILLLILLFGPCI). A lipid anchor (S-palmitoyl cysteine; by host) is attached at Cys-606. Residues 608-642 (LNRLVQFVKDRISVVQALILTQQYQQIKQYDPDRP) lie on the Cytoplasmic side of the membrane.

The mature envelope protein (Env) consists of a trimer of SU-TM heterodimers attached by a labile interchain disulfide bond. Specific enzymatic cleavages in vivo yield mature proteins. Envelope glycoproteins are synthesized as an inactive precursor that is N-glycosylated and processed likely by host cell furin or by a furin-like protease in the Golgi to yield the mature SU and TM proteins. The cleavage site between SU and TM requires the minimal sequence [KR]-X-[KR]-R. The R-peptide is released from the C-terminus of the cytoplasmic tail of the TM protein upon particle formation as a result of proteolytic cleavage by the viral protease. Cleavage of this peptide is required for TM to become fusogenic. Post-translationally, the CXXC motif is highly conserved across a broad range of retroviral envelope proteins. It is thought to participate in the formation of a labile disulfide bond possibly with the CX6CC motif present in the transmembrane protein. Isomerization of the intersubunit disulfide bond to an SU intrachain disulfide bond is thought to occur upon receptor recognition in order to allow membrane fusion. In terms of processing, the transmembrane protein is palmitoylated. The R-peptide is palmitoylated.

The protein resides in the virion membrane. Its subcellular location is the host cell membrane. Functionally, the surface protein (SU) attaches the virus to the host cell by binding to its receptor. This interaction triggers the refolding of the transmembrane protein (TM) and is thought to activate its fusogenic potential by unmasking its fusion peptide. Fusion occurs at the host cell plasma membrane. Its function is as follows. The transmembrane protein (TM) acts as a class I viral fusion protein. Under the current model, the protein has at least 3 conformational states: pre-fusion native state, pre-hairpin intermediate state, and post-fusion hairpin state. During viral and target cell membrane fusion, the coiled coil regions (heptad repeats) assume a trimer-of-hairpins structure, positioning the fusion peptide in close proximity to the C-terminal region of the ectodomain. The formation of this structure appears to drive apposition and subsequent fusion of viral and target cell membranes. Membranes fusion leads to delivery of the nucleocapsid into the cytoplasm. The polypeptide is Envelope glycoprotein (env) (Felidae (cat family)).